The following is a 417-amino-acid chain: Gamma-glutamyl phosphate reductase (417 aa).

The protein belongs to the gamma-glutamyl phosphate reductase family.

It is found in the cytoplasm. The enzyme catalyses L-glutamate 5-semialdehyde + phosphate + NADP(+) = L-glutamyl 5-phosphate + NADPH + H(+). Its pathway is amino-acid biosynthesis; L-proline biosynthesis; L-glutamate 5-semialdehyde from L-glutamate: step 2/2. In terms of biological role, catalyzes the NADPH-dependent reduction of L-glutamate 5-phosphate into L-glutamate 5-semialdehyde and phosphate. The product spontaneously undergoes cyclization to form 1-pyrroline-5-carboxylate. The polypeptide is Gamma-glutamyl phosphate reductase (Chlorobium phaeobacteroides (strain BS1)).